The chain runs to 173 residues: Transcriptional repressor NrdR (173 aa).

A zinc finger lies at 3–34; it reads CPYCGSLDTQVKDSRPTEDNTAIRRRRVCPDC. Positions 49 to 139 constitute an ATP-cone domain; that stretch reads LMVVKRSGRR…VYRNFREARD (91 aa).

It belongs to the NrdR family. The cofactor is Zn(2+).

Functionally, negatively regulates transcription of bacterial ribonucleotide reductase nrd genes and operons by binding to NrdR-boxes. The chain is Transcriptional repressor NrdR from Azorhizobium caulinodans (strain ATCC 43989 / DSM 5975 / JCM 20966 / LMG 6465 / NBRC 14845 / NCIMB 13405 / ORS 571).